Here is a 431-residue protein sequence, read N- to C-terminus: Trigger factor (431 aa).

In terms of domain architecture, PPIase FKBP-type spans 158–243 (GDLVAVETWS…VAEVSEPVVP (86 aa)).

It belongs to the FKBP-type PPIase family. Tig subfamily.

It localises to the cytoplasm. It catalyses the reaction [protein]-peptidylproline (omega=180) = [protein]-peptidylproline (omega=0). In terms of biological role, involved in protein export. Acts as a chaperone by maintaining the newly synthesized protein in an open conformation. Functions as a peptidyl-prolyl cis-trans isomerase. In Stenotrophomonas maltophilia (strain R551-3), this protein is Trigger factor.